The following is a 253-amino-acid chain: HTH-type transcriptional repressor DasR (253 aa).

The 71-residue stretch at 16 to 86 (RAQRVPKYYR…QGKGTFVAKP (71 aa)) folds into the HTH gntR-type domain. The H-T-H motif DNA-binding region spans 46-65 (ERTLAAEFDTSRTTVPQALQ).

The protein resides in the cytoplasm. Global regulator that is part of the nutrient-sensing system. In the absence of glucosamine 6-P (GlcN6P), represses the phosphotransferase system (PTS) specific for the uptake of N-acetylglucosamine (PTSNag), and genes involved in the metabolism of chitin, as well as several genes involved in development, thereby linking carbon availability to morphogenesis. Regulates the dasABC transport operon involved in glucose-related morphogenesis. Essential for development. This chain is HTH-type transcriptional repressor DasR (dasR), found in Streptomyces griseus.